The primary structure comprises 298 residues: Oxygen-dependent coproporphyrinogen-III oxidase (298 aa).

Ser92 provides a ligand contact to substrate. A divalent metal cation is bound by residues His96 and His106. Catalysis depends on His106, which acts as the Proton donor. Asn108 to Arg110 contributes to the substrate binding site. His145 and His175 together coordinate a divalent metal cation. An important for dimerization region spans residues Tyr239–Glu274. Gly257–Arg259 lines the substrate pocket.

It belongs to the aerobic coproporphyrinogen-III oxidase family. In terms of assembly, homodimer. Requires a divalent metal cation as cofactor.

It is found in the cytoplasm. It catalyses the reaction coproporphyrinogen III + O2 + 2 H(+) = protoporphyrinogen IX + 2 CO2 + 2 H2O. The protein operates within porphyrin-containing compound metabolism; protoporphyrin-IX biosynthesis; protoporphyrinogen-IX from coproporphyrinogen-III (O2 route): step 1/1. In terms of biological role, involved in the heme biosynthesis. Catalyzes the aerobic oxidative decarboxylation of propionate groups of rings A and B of coproporphyrinogen-III to yield the vinyl groups in protoporphyrinogen-IX. This chain is Oxygen-dependent coproporphyrinogen-III oxidase, found in Stenotrophomonas maltophilia (strain K279a).